A 453-amino-acid chain; its full sequence is Carbamoyl phosphate synthase arginine-specific small chain (453 aa).

The transit peptide at 1–28 (MFARVFKAMPARASALTSVNASIPARFM) directs the protein to the mitochondrion. Residues 219 to 406 (HVAVIDCGVK…IDSVKKYKAS (188 aa)) form the Glutamine amidotransferase type-1 domain. Cys-295 functions as the Nucleophile in the catalytic mechanism. Active-site residues include His-379 and Glu-381.

It belongs to the CarA family. In terms of assembly, heterodimer composed of 2 chains; the small (or glutamine) chain promotes the hydrolysis of glutamine to ammonia, which is used by the large (or ammonia) chain to synthesize carbamoyl phosphate.

Its subcellular location is the mitochondrion matrix. The catalysed reaction is hydrogencarbonate + L-glutamine + 2 ATP + H2O = carbamoyl phosphate + L-glutamate + 2 ADP + phosphate + 2 H(+). It catalyses the reaction L-glutamine + H2O = L-glutamate + NH4(+). The protein operates within amino-acid biosynthesis; L-arginine biosynthesis; carbamoyl phosphate from bicarbonate: step 1/1. Its function is as follows. Small subunit of the arginine-specific carbamoyl phosphate synthase (CPSase). CPSase catalyzes the formation of carbamoyl phosphate from the ammonia moiety of glutamine, carbonate, and phosphate donated by ATP, the first step of the arginine biosynthetic pathway. The small subunit (glutamine amidotransferase) binds and cleaves glutamine to supply the large subunit with the substrate ammonia. The sequence is that of Carbamoyl phosphate synthase arginine-specific small chain (cpa1) from Aspergillus fumigatus (strain ATCC MYA-4609 / CBS 101355 / FGSC A1100 / Af293) (Neosartorya fumigata).